A 797-amino-acid chain; its full sequence is Probable DNA polymerase (797 aa).

This sequence belongs to the DNA polymerase type-B family.

It is found in the mitochondrion. The enzyme catalyses DNA(n) + a 2'-deoxyribonucleoside 5'-triphosphate = DNA(n+1) + diphosphate. The polypeptide is Probable DNA polymerase (Agaricus bitorquis (Pavement mushroom)).